A 122-amino-acid polypeptide reads, in one-letter code: Large ribosomal subunit protein uL14 (122 aa).

It belongs to the universal ribosomal protein uL14 family. In terms of assembly, part of the 50S ribosomal subunit. Forms a cluster with proteins L3 and L19. In the 70S ribosome, L14 and L19 interact and together make contacts with the 16S rRNA in bridges B5 and B8.

In terms of biological role, binds to 23S rRNA. Forms part of two intersubunit bridges in the 70S ribosome. The polypeptide is Large ribosomal subunit protein uL14 (Limosilactobacillus reuteri (strain DSM 20016) (Lactobacillus reuteri)).